A 342-amino-acid polypeptide reads, in one-letter code: 4-hydroxy-2-oxovalerate aldolase (342 aa).

In terms of domain architecture, Pyruvate carboxyltransferase spans 8–260 (ITVHDMTLRD…ATGVDLFKMQ (253 aa)). Substrate is bound at residue 16–17 (RD). A Mn(2+)-binding site is contributed by D17. Residue H20 is the Proton acceptor of the active site. Positions 170 and 199 each coordinate substrate. Residues H199 and H201 each contribute to the Mn(2+) site. Y290 is a binding site for substrate.

The protein belongs to the 4-hydroxy-2-oxovalerate aldolase family.

The enzyme catalyses (S)-4-hydroxy-2-oxopentanoate = acetaldehyde + pyruvate. The polypeptide is 4-hydroxy-2-oxovalerate aldolase (Albidiferax ferrireducens (strain ATCC BAA-621 / DSM 15236 / T118) (Rhodoferax ferrireducens)).